We begin with the raw amino-acid sequence, 101 residues long: Protein S100-A7-like 2 (101 aa).

2 consecutive EF-hand domains span residues 13 to 48 (IVAMFRQYSGDDGRMDMPGLVNLMKENFPNFLSGCE) and 50 to 85 (SDMDYLSNALEKKDDNKDKKVNYSEFLSLLGDITID). Asp63, Asn65, Asp67, Lys69, and Glu74 together coordinate Ca(2+). Zn(2+) contacts are provided by His87 and His91.

The protein belongs to the S-100 family.

The chain is Protein S100-A7-like 2 (S100A7L2) from Homo sapiens (Human).